The chain runs to 135 residues: Aspartate 1-decarboxylase (135 aa).

Catalysis depends on S25, which acts as the Schiff-base intermediate with substrate; via pyruvic acid. S25 carries the post-translational modification Pyruvic acid (Ser). Residue T57 participates in substrate binding. Y58 acts as the Proton donor in catalysis. 73 to 75 (GAA) provides a ligand contact to substrate.

It belongs to the PanD family. In terms of assembly, heterooctamer of four alpha and four beta subunits. Requires pyruvate as cofactor. Is synthesized initially as an inactive proenzyme, which is activated by self-cleavage at a specific serine bond to produce a beta-subunit with a hydroxyl group at its C-terminus and an alpha-subunit with a pyruvoyl group at its N-terminus.

It localises to the cytoplasm. It carries out the reaction L-aspartate + H(+) = beta-alanine + CO2. It participates in cofactor biosynthesis; (R)-pantothenate biosynthesis; beta-alanine from L-aspartate: step 1/1. Its function is as follows. Catalyzes the pyruvoyl-dependent decarboxylation of aspartate to produce beta-alanine. This chain is Aspartate 1-decarboxylase, found in Mycolicibacterium vanbaalenii (strain DSM 7251 / JCM 13017 / BCRC 16820 / KCTC 9966 / NRRL B-24157 / PYR-1) (Mycobacterium vanbaalenii).